We begin with the raw amino-acid sequence, 254 residues long: Uridylate kinase (254 aa).

ATP is bound at residue 9–12 (KLSG). G51 contributes to the UMP binding site. 2 residues coordinate ATP: G52 and R56. UMP contacts are provided by residues D72 and 133 to 140 (SGNPFFTT). Residues T160, Y166, and D169 each coordinate ATP.

Belongs to the UMP kinase family. As to quaternary structure, homohexamer.

The protein localises to the cytoplasm. The catalysed reaction is UMP + ATP = UDP + ADP. It functions in the pathway pyrimidine metabolism; CTP biosynthesis via de novo pathway; UDP from UMP (UMPK route): step 1/1. With respect to regulation, inhibited by UTP. Functionally, catalyzes the reversible phosphorylation of UMP to UDP. The protein is Uridylate kinase of Synechococcus sp. (strain JA-3-3Ab) (Cyanobacteria bacterium Yellowstone A-Prime).